Reading from the N-terminus, the 284-residue chain is 2-dehydro-3-deoxyphosphooctonate aldolase (284 aa).

It belongs to the KdsA family.

It is found in the cytoplasm. The enzyme catalyses D-arabinose 5-phosphate + phosphoenolpyruvate + H2O = 3-deoxy-alpha-D-manno-2-octulosonate-8-phosphate + phosphate. It participates in carbohydrate biosynthesis; 3-deoxy-D-manno-octulosonate biosynthesis; 3-deoxy-D-manno-octulosonate from D-ribulose 5-phosphate: step 2/3. It functions in the pathway bacterial outer membrane biogenesis; lipopolysaccharide biosynthesis. The polypeptide is 2-dehydro-3-deoxyphosphooctonate aldolase (Burkholderia cenocepacia (strain ATCC BAA-245 / DSM 16553 / LMG 16656 / NCTC 13227 / J2315 / CF5610) (Burkholderia cepacia (strain J2315))).